The following is a 701-amino-acid chain: Glycine--tRNA ligase beta subunit (701 aa).

It belongs to the class-II aminoacyl-tRNA synthetase family. In terms of assembly, tetramer of two alpha and two beta subunits.

It localises to the cytoplasm. It catalyses the reaction tRNA(Gly) + glycine + ATP = glycyl-tRNA(Gly) + AMP + diphosphate. The protein is Glycine--tRNA ligase beta subunit of Helicobacter pylori (strain G27).